The primary structure comprises 732 residues: 1,4-alpha-glucan branching enzyme GlgB 1 (732 aa).

Aspartate 411 (nucleophile) is an active-site residue. The Proton donor role is filled by glutamate 464.

The protein belongs to the glycosyl hydrolase 13 family. GlgB subfamily. Monomer.

It catalyses the reaction Transfers a segment of a (1-&gt;4)-alpha-D-glucan chain to a primary hydroxy group in a similar glucan chain.. The protein operates within glycan biosynthesis; glycogen biosynthesis. Functionally, catalyzes the formation of the alpha-1,6-glucosidic linkages in glycogen by scission of a 1,4-alpha-linked oligosaccharide from growing alpha-1,4-glucan chains and the subsequent attachment of the oligosaccharide to the alpha-1,6 position. In Xanthomonas euvesicatoria pv. vesicatoria (strain 85-10) (Xanthomonas campestris pv. vesicatoria), this protein is 1,4-alpha-glucan branching enzyme GlgB 1.